The following is an 838-amino-acid chain: Protein translocase subunit SecA 1 (838 aa).

ATP-binding positions include Gln-85, 103–107 (GEGKT), and Asp-493. Positions 823, 825, 834, and 835 each coordinate Zn(2+).

This sequence belongs to the SecA family. Monomer and homodimer. Part of the essential Sec protein translocation apparatus which comprises SecA, SecYEG and auxiliary proteins SecDF. Other proteins may also be involved. Zn(2+) is required as a cofactor.

The protein resides in the cell membrane. It localises to the cytoplasm. It carries out the reaction ATP + H2O + cellular proteinSide 1 = ADP + phosphate + cellular proteinSide 2.. Part of the Sec protein translocase complex. Interacts with the SecYEG preprotein conducting channel. Has a central role in coupling the hydrolysis of ATP to the transfer of proteins into and across the cell membrane, serving as an ATP-driven molecular motor driving the stepwise translocation of polypeptide chains across the membrane. This is Protein translocase subunit SecA 1 from Streptococcus gordonii.